We begin with the raw amino-acid sequence, 234 residues long: Membrane glycoprotein RL11 (234 aa).

The N-terminal stretch at 1–23 (MQTYSTPLTLIIVTSLFLFTTQG) is a signal peptide. A helical transmembrane segment spans residues 183–203 (LHCAWVSGLMIFVGALVICFL).

Its subcellular location is the host membrane. This is Membrane glycoprotein RL11 (RL11) from Human cytomegalovirus (strain Merlin) (HHV-5).